Reading from the N-terminus, the 1620-residue chain is Probable serine/threonine-protein kinase gdt4 (1620 aa).

Positions 1–19 are cleaved as a signal peptide; the sequence is MKLEQRIFFLICLVINSFS. Topologically, residues 20-891 are extracellular; the sequence is NCSLLVAPDG…EVIGINEQLN (872 aa). Residues 892–912 form a helical membrane-spanning segment; the sequence is ILAIVLPITISLFAAASILAG. Residues 913–1620 lie on the Cytoplasmic side of the membrane; it reads YLVIKKYKKP…AKRNKKNQNQ (708 aa). Residues 1349–1604 form the Protein kinase domain; it reads IVLEKYLSEG…TLIDLLEKLL (256 aa). Residues 1355–1363 and K1376 contribute to the ATP site; that span reads LSEGSFGVV. The active-site Proton acceptor is D1466.

It in the N-terminal section; belongs to the GDT family. The protein in the C-terminal section; belongs to the protein kinase superfamily. TKL Ser/Thr protein kinase family.

It is found in the membrane. It catalyses the reaction L-seryl-[protein] + ATP = O-phospho-L-seryl-[protein] + ADP + H(+). It carries out the reaction L-threonyl-[protein] + ATP = O-phospho-L-threonyl-[protein] + ADP + H(+). This Dictyostelium discoideum (Social amoeba) protein is Probable serine/threonine-protein kinase gdt4 (gdt4).